The sequence spans 516 residues: Radial spoke head protein 3 homolog A (516 aa).

Disordered regions lie at residues 1–45 (MAAT…GNPA), 120–139 (STLN…AEAS), and 190–233 (PTGQ…PVEG). The span at 12–25 (AKKRPLHQRARRPA) shows a compositional bias: basic residues. A compositionally biased stretch (polar residues) spans 120 to 129 (STLNQASAMT). Positions 208-217 (QARRRALARK) are enriched in basic residues. Positions 218-233 (RAQEQLKPRTPEPVEG) are enriched in basic and acidic residues. Threonine 270 carries the phosphothreonine; by MAPK1 modification. Residues 333–369 (YEEIRNVELAEVQRLEEQERRHREEKERRKKQQWEIV) are a coiled coil. The tract at residues 459 to 516 (EAMPPGQKTNVINGPNTVTDPSVTTLHTQKPVLDRVSSQPAPSQERKPVEEGGHLMAE) is disordered. A compositionally biased stretch (polar residues) spans 465-486 (QKTNVINGPNTVTDPSVTTLHT). Residues 502–516 (QERKPVEEGGHLMAE) show a composition bias toward basic and acidic residues.

It belongs to the flagellar radial spoke RSP3 family. In terms of assembly, may be a component of axonemal radial spokes. Interacts with IQUB. Interacts with phosphorylated MAPK1. Interacts with MEK1. Interacts with PKA regulatory subunits PRKAR1A and PRKAR1B. Interacts with RSPH1. Interacts with RSPH4A. Interacts with RSPH6A. Interacts with RSPH9. Interacts with CFAP61. Interacts with LRRC23.

It is found in the cytoplasm. The protein resides in the cytoskeleton. Its subcellular location is the cilium axoneme. The protein localises to the flagellum axoneme. Functionally, may function as part of axonemal radial spoke complexes that play an important part in the motility of sperm and cilia. Functions as a protein kinase A-anchoring protein that scaffolds the cAMP-dependent protein kinase holoenzyme. May serve as a point of convergence for MAPK and PKA signaling in cilia. The chain is Radial spoke head protein 3 homolog A (Rsph3a) from Mus musculus (Mouse).